We begin with the raw amino-acid sequence, 527 residues long: Ankyrin repeat domain-containing protein 42 (527 aa).

The segment at 1-27 is disordered; the sequence is MPGVANPGPSKSRRETADSSSRKKVHF. Residues 12–21 show a composition bias toward basic and acidic residues; sequence SRRETADSSS. ANK repeat units lie at residues 25-54, 59-88, 92-121, 125-154, 158-187, 191-220, 228-257, 263-293, 297-326, and 330-360; these read VHFS…NLNE, HQFT…DATQ, RGWT…NLAT, RGCT…DPSV, REWK…GIED, NGNL…SATQ, NGEN…EGSH, DLAF…NLNE, NGST…ESNI, and AGET…EIDD. Residues 395 to 484 are a coiled coil; the sequence is NARMRAHKKI…ETLQKIQVTS (90 aa).

The protein is Ankyrin repeat domain-containing protein 42 (Ankrd42) of Mus musculus (Mouse).